We begin with the raw amino-acid sequence, 391 residues long: Tryptophan synthase beta chain (391 aa).

Residue K84 is modified to N6-(pyridoxal phosphate)lysine.

This sequence belongs to the TrpB family. As to quaternary structure, tetramer of two alpha and two beta chains. Pyridoxal 5'-phosphate serves as cofactor.

The catalysed reaction is (1S,2R)-1-C-(indol-3-yl)glycerol 3-phosphate + L-serine = D-glyceraldehyde 3-phosphate + L-tryptophan + H2O. It functions in the pathway amino-acid biosynthesis; L-tryptophan biosynthesis; L-tryptophan from chorismate: step 5/5. The beta subunit is responsible for the synthesis of L-tryptophan from indole and L-serine. The protein is Tryptophan synthase beta chain of Thermoanaerobacter pseudethanolicus (strain ATCC 33223 / 39E) (Clostridium thermohydrosulfuricum).